The sequence spans 631 residues: Mitochondrial Rho GTPase 1 (631 aa).

Residues 1 to 605 are Cytoplasmic-facing; sequence MPAGRGRPLR…TQADLKSSTF (605 aa). The 167-residue stretch at 15 to 181 folds into the Miro 1 domain; sequence KKDVRILLVG…FYYAQKAVLH (167 aa). Residues Arg-27, Gly-29, Lys-30, Thr-31, and Ser-32 each contribute to the GTP site. Thr-31 lines the Mg(2+) pocket. Mg(2+) is bound by residues Pro-48 and Asp-70. Ser-72 lines the GTP pocket. Position 105 is an N6-acetyllysine (Lys-105). Asn-131, Lys-132, Asp-134, Ala-162, and Lys-163 together coordinate GTP. Lys-166 participates in a covalent cross-link: Glycyl lysine isopeptide (Lys-Gly) (interchain with G-Cter in ubiquitin). An EF-hand 1 domain is found at 197–232; sequence ACIKALTRIFKISDQDNDGTLNDAELNFFQRICFNT. Asp-210, Asp-212, Asp-214, Thr-216, and Glu-221 together coordinate Ca(2+). Lys-248 participates in a covalent cross-link: Glycyl lysine isopeptide (Lys-Gly) (interchain with G-Cter in ubiquitin). The 36-residue stretch at 317-352 folds into the EF-hand 2 domain; it reads HAYLFLQSTFDKHDLDRDCALSPDELKDLFKVFPYI. Ca(2+) contacts are provided by Asp-330, Asp-332, Asp-334, Ala-336, and Glu-341. Positions 429 to 592 constitute a Miro 2 domain; that stretch reads RNVFRCNVIG…FVKLTTMAMY (164 aa). Residues Asn-441, Cys-442, Gly-443, Lys-444, Ser-445, Gly-446, Lys-460, Lys-541, Asp-543, Thr-571, and Cys-572 each contribute to the GTP site. Asn-441 is a binding site for Mg(2+). Lys-585 participates in a covalent cross-link: Glycyl lysine isopeptide (Lys-Gly) (interchain with G-Cter in ubiquitin). The chain crosses the membrane as a helical; Anchor for type IV membrane protein span at residues 606–628; sequence WLRASFGATVFAVLGFAMYKALL. The Mitochondrial intermembrane portion of the chain corresponds to 629-631; the sequence is KQR.

This sequence belongs to the mitochondrial Rho GTPase family. In terms of assembly, homodimer. Interacts with the kinesin-binding proteins TRAK1/OIP106 and TRAK2/GRIF1, forming a link between mitochondria and the trafficking apparatus of the microtubules. Interacts with RAP1GDS1. Interacts with ARMCX1. Found in a complex with KIF5B, OGT, RHOT2 and TRAK1. Ubiquitinated by PRKN during mitophagy, leading to its degradation and enhancement of mitophagy. Deubiquitinated by USP30. Post-translationally, acetylation on Lys-105 decreases sensitivity of mitochondrial transport to elevated Ca(2+) levels, increases mitochondrial transport and promotes axon growth. Deacetylated by HDAC6 which blocks mitochondrial transport and mediates axon growth inhibition.

Its subcellular location is the mitochondrion outer membrane. The enzyme catalyses GTP + H2O = GDP + phosphate + H(+). It carries out the reaction ATP + H2O = ADP + phosphate + H(+). The catalysed reaction is UTP + H2O = UDP + phosphate + H(+). Its function is as follows. Atypical mitochondrial nucleoside-triphosphatase (NTPase) involved in mitochondrial trafficking. Probably involved in control of anterograde transport of mitochondria and their subcellular distribution. Promotes mitochondrial fission during high calcium conditions. Can hydrolyze GTP, ATP and UTP. The polypeptide is Mitochondrial Rho GTPase 1 (RHOT1) (Bos taurus (Bovine)).